The chain runs to 87 residues: U3-theraphotoxin-Hhn1a 7 (87 aa).

Residues 1-24 form the signal peptide; the sequence is MVNMKASMFLTFAGLVLLFVVSYA. Residues 25–52 constitute a propeptide that is removed on maturation; sequence SESEEKEFPKEMLSSIFAVDNDFKQEER. 3 disulfides stabilise this stretch: Cys54–Cys67, Cys61–Cys72, and Cys66–Cys79.

Belongs to the neurotoxin 10 (Hwtx-1) family. 51 (Hntx-8) subfamily. Hntx-8 sub-subfamily. Expressed by the venom gland.

Its subcellular location is the secreted. Ion channel inhibitor. The sequence is that of U3-theraphotoxin-Hhn1a 7 from Cyriopagopus hainanus (Chinese bird spider).